Consider the following 377-residue polypeptide: tRNA-specific 2-thiouridylase MnmA (377 aa).

ATP contacts are provided by residues 9-16 (AMSGGVDS) and L35. C105 functions as the Nucleophile in the catalytic mechanism. The cysteines at positions 105 and 201 are disulfide-linked. G129 contributes to the ATP binding site. The interval 151–153 (KNQ) is interaction with tRNA. The Cysteine persulfide intermediate role is filled by C201. The interval 307 to 308 (RY) is interaction with tRNA.

It belongs to the MnmA/TRMU family.

The protein localises to the cytoplasm. The enzyme catalyses S-sulfanyl-L-cysteinyl-[protein] + uridine(34) in tRNA + AH2 + ATP = 2-thiouridine(34) in tRNA + L-cysteinyl-[protein] + A + AMP + diphosphate + H(+). Functionally, catalyzes the 2-thiolation of uridine at the wobble position (U34) of tRNA, leading to the formation of s(2)U34. This Leptospira borgpetersenii serovar Hardjo-bovis (strain JB197) protein is tRNA-specific 2-thiouridylase MnmA.